Here is a 130-residue protein sequence, read N- to C-terminus: Small ribosomal subunit protein uS9 (130 aa).

Belongs to the universal ribosomal protein uS9 family.

The polypeptide is Small ribosomal subunit protein uS9 (Leptothrix cholodnii (strain ATCC 51168 / LMG 8142 / SP-6) (Leptothrix discophora (strain SP-6))).